Reading from the N-terminus, the 139-residue chain is Maximins 4/H3 type 7 (139 aa).

The N-terminal stretch at 1–18 (MNFKYIVAVSFLIASAYA) is a signal peptide. The propeptide occupies 19 to 43 (RSVQNDEQSLSQRDVLEEESLREIR). Residue Asn70 is modified to Asparagine amide. Residues 74–118 (TAEDHEVMKRLEAIMRDLDSLDYPEEASERETRGFNQDEIAKEKR) constitute a propeptide that is removed on maturation. At Ile138 the chain carries Isoleucine amide.

It belongs to the bombinin family. Expressed by the skin glands.

It is found in the secreted. Its function is as follows. Maximin-4 shows antibacterial activity against both Gram-positive and Gram-negative bacteria. It also shows antimicrobial activity against the fungus C.albicans, but not against A.flavus nor P.uticale. It has little hemolytic activity. It does not possess a significant cytotoxicity against tumor cell lines. It does not possess a significant anti-HIV activity. Maximin-H3 shows antibacterial activity against both Gram-positive and Gram-negative bacteria. It also shows antimicrobial activity against the fungus C.albicans. Shows strong hemolytic activity. This chain is Maximins 4/H3 type 7, found in Bombina maxima (Giant fire-bellied toad).